The chain runs to 412 residues: MAFPPVDEQMTVLRRGAEEIVPEDELAEKLRTSRETDTPLTVKLGCDPSRPDLHLGHTVVLRKLRQFQDFGHRAVLIVGDFTGMIGDPSGRSKTRPQLTLEETREHGQSYYEQATRVLDPNKTEIRYNSEWLDEMRFSDVIELAAQQTVAQMLKRDDFNERYEAGQPISLHEFLYPLAQARDSVHIEADVELGGTDQRFNLLLARRLQEANDQAAQVCMMLPLLEGTDGSDKMSKSLDNAIGIAEAPEDMYGKTMSVPDDLIYRYVELVTDIPTEQLPKVKQFAESNPRAAKAQLARRIVEMYHGEEAADRAEEHFEQTVVEGGVPDDLPEYTPTPEDGAEVGLLNLMRHADLTDSNSEGRRMIEQGAVTIDEEKVTDTGRYIDVAEEAPFVLQVGKRRFARIRPPENGTDV.

The 'HIGH' region motif lies at 48-57 (PSRPDLHLGH). A 'KMSKS' region motif is present at residues 232 to 236 (KMSKS). K235 provides a ligand contact to ATP. The 64-residue stretch at 342–405 (VGLLNLMRHA…GKRRFARIRP (64 aa)) folds into the S4 RNA-binding domain.

It belongs to the class-I aminoacyl-tRNA synthetase family. TyrS type 2 subfamily. Homodimer.

The protein resides in the cytoplasm. The catalysed reaction is tRNA(Tyr) + L-tyrosine + ATP = L-tyrosyl-tRNA(Tyr) + AMP + diphosphate + H(+). Its function is as follows. Catalyzes the attachment of tyrosine to tRNA(Tyr) in a two-step reaction: tyrosine is first activated by ATP to form Tyr-AMP and then transferred to the acceptor end of tRNA(Tyr). This Salinibacter ruber (strain DSM 13855 / M31) protein is Tyrosine--tRNA ligase.